The following is a 457-amino-acid chain: DDB1- and CUL4-associated factor 10 (457 aa).

4 WD repeats span residues 65 to 104 (RTHG…HIKT), 108 to 146 (AHED…SKAC), 150 to 189 (GHTS…EDGC), and 195 to 234 (FHTR…KSLE). A compositionally biased stretch (low complexity) spans 246–265 (TASTSDMTSTSSETRPSSSP). A disordered region spans residues 246-304 (TASTSDMTSTSSETRPSSSPCHNSDSGPLFEKHMSRSSQREGTSPRNSLEVLTPEVPGE). Residues 281 to 292 (RSSQREGTSPRN) are compositionally biased toward polar residues. WD repeat units lie at residues 306–346 (DRGN…QEGT), 368–406 (VGRG…KELV), and 424–457 (SHKD…QPKF).

This sequence belongs to the WD repeat DCAF10 family.

It participates in protein modification; protein ubiquitination. May function as a substrate receptor for CUL4-DDB1 E3 ubiquitin-protein ligase complex. This Xenopus laevis (African clawed frog) protein is DDB1- and CUL4-associated factor 10 (dcaf10).